A 254-amino-acid polypeptide reads, in one-letter code: Small ribosomal subunit protein uS5 (254 aa).

Positions 1-10 (MSAPEAQQQK) are enriched in polar residues. Positions 1–34 (MSAPEAQQQKRGGFGGRNRGRPNRRGPRNTEEKG) are disordered. Position 2 is an N-acetylserine (S2). At R11 the chain carries Asymmetric dimethylarginine; by HMT1; alternate. The residue at position 11 (R11) is an Omega-N-methylarginine; by HMT1; alternate. Position 17 is an omega-N-methylarginine; by HMT1 (R17). Residues 18 to 27 (NRGRPNRRGP) show a composition bias toward basic residues. A Glycyl lysine isopeptide (Lys-Gly) (interchain with G-Cter in ubiquitin) cross-link involves residue K33. One can recognise an S5 DRBM domain in the interval 76–139 (LQDEVMNIKP…IIAKLSVIPI (64 aa)).

This sequence belongs to the universal ribosomal protein uS5 family. In terms of assembly, component of the small ribosomal subunit (SSU). Mature yeast ribosomes consist of a small (40S) and a large (60S) subunit. The 40S small subunit contains 1 molecule of ribosomal RNA (18S rRNA) and 33 different proteins (encoded by 57 genes). The large 60S subunit contains 3 rRNA molecules (25S, 5.8S and 5S rRNA) and 46 different proteins (encoded by 81 genes). Interacts with snoRNA U3. Interacts with MPP10. Component of the ribosomal small subunit (SSU) processome composed of at least 40 protein subunits and snoRNA U3. In terms of processing, N-terminally acetylated by acetyltransferase NatA.

Its subcellular location is the cytoplasm. The protein resides in the nucleus. It is found in the nucleolus. Its function is as follows. Component of the ribosome, a large ribonucleoprotein complex responsible for the synthesis of proteins in the cell. The small ribosomal subunit (SSU) binds messenger RNAs (mRNAs) and translates the encoded message by selecting cognate aminoacyl-transfer RNA (tRNA) molecules. The large subunit (LSU) contains the ribosomal catalytic site termed the peptidyl transferase center (PTC), which catalyzes the formation of peptide bonds, thereby polymerizing the amino acids delivered by tRNAs into a polypeptide chain. The nascent polypeptides leave the ribosome through a tunnel in the LSU and interact with protein factors that function in enzymatic processing, targeting, and the membrane insertion of nascent chains at the exit of the ribosomal tunnel. uS5 is important for the assembly and function of the 40S ribosomal subunit. Mutations in this protein affects the control of translational fidelity. Involved in nucleolar processing of pre-18S ribosomal RNA and ribosome assembly. The protein is Small ribosomal subunit protein uS5 of Saccharomyces cerevisiae (strain ATCC 204508 / S288c) (Baker's yeast).